The sequence spans 336 residues: Tryptophan--tRNA ligase (336 aa).

ATP-binding positions include 16-18 and 24-25; these read QPT and GN. The short motif at 17-25 is the 'HIGH' region element; it reads PTGQLHLGN. Aspartate 140 contributes to the L-tryptophan binding site. ATP contacts are provided by residues 152-154, valine 191, and 200-204; these read GED and KMSKS. The 'KMSKS' region signature appears at 200–204; it reads KMSKS.

It belongs to the class-I aminoacyl-tRNA synthetase family. As to quaternary structure, homodimer.

The protein localises to the cytoplasm. It carries out the reaction tRNA(Trp) + L-tryptophan + ATP = L-tryptophyl-tRNA(Trp) + AMP + diphosphate + H(+). Functionally, catalyzes the attachment of tryptophan to tRNA(Trp). This chain is Tryptophan--tRNA ligase, found in Gloeobacter violaceus (strain ATCC 29082 / PCC 7421).